Consider the following 1773-residue polypeptide: Mucin-22 (1773 aa).

Positions 1–26 are cleaved as a signal peptide; it reads MRRGNISPAFWFLWLLLFGLLGPSSE. The Extracellular portion of the chain corresponds to 27-1660; the sequence is NTTAFTKGSD…VIKPSGYLQP (1634 aa). Disordered regions lie at residues 61–102, 176–357, 372–405, 434–572, 590–674, 754–1026, 1064–1485, and 1603–1639; these read TGSK…TDSG, TMAS…SETT, MGSETTTNSTTSSETTVTSTAGSETTTVSTVGSE, SETI…STAS, TVGS…EGSE, DTTT…ETTM, TTIA…GSET, and MGASSTTSAHGVRTTTGSTREPTSSTFQETGPVSMGT. Residues 153 to 1514 form a 124 X 10 AA approximate repeats region; it reads MASSTTSTAG…PTATSLTGSE (1362 aa). Over residues 178–243 the composition is skewed to low complexity; it reads ASTTGSETAT…GSEATTTSTA (66 aa). Residues 248–258 are compositionally biased toward polar residues; that stretch reads ITASSMSSETT. Over residues 262–357 the composition is skewed to low complexity; it reads AAGSNTTTAS…TVSTAGSETT (96 aa). Composition is skewed to low complexity over residues 440-481 and 490-546; these read STAG…AAST and STAG…SEPT. Residues 547-572 show a composition bias toward polar residues; sequence MASTMGSETTMASTIGPETTKVSTAS. Low complexity-rich tracts occupy residues 755 to 1025 and 1064 to 1465; these read TTTA…SETT and TTIA…GSET. 2 stretches are compositionally biased toward polar residues: residues 1466-1485 and 1615-1639; these read NTACTTGSETSTPSSAGSET and RTTTGSTREPTSSTFQETGPVSMGT. The chain crosses the membrane as a helical span at residues 1661 to 1681; that stretch reads WAIILISLAAVVAAVGLSVGL. The Cytoplasmic segment spans residues 1682–1773; that stretch reads SFCLRNLFFP…GGHYGHGGGH (92 aa).

As to expression, expressed in lung by serous cells of the submucosal gland (at protein level). Detected in the placenta, lung and testis.

The protein localises to the membrane. This is Mucin-22 (MUC22) from Homo sapiens (Human).